A 495-amino-acid chain; its full sequence is Germacrene A acid 8-beta-hydroxylase (495 aa).

Residues 3–23 (PFTTFSLVASSLILLICWALV) traverse the membrane as a helical; Signal-anchor for type II membrane protein segment. N103 carries an N-linked (GlcNAc...) asparagine glycan. Residue C433 coordinates heme.

This sequence belongs to the cytochrome P450 family. Heme serves as cofactor. As to expression, mostly expressed in leaves and flowers, and, to a lower extent, in roots and stems.

The protein resides in the membrane. It carries out the reaction germacra-1(10),4,11(13)-trien-12-oate + reduced [NADPH--hemoprotein reductase] + O2 = 8beta-hydroxygermacra-1(10),4,11(13)-trien-12-oate + oxidized [NADPH--hemoprotein reductase] + H2O + H(+). The enzyme catalyses germacra-1(10),4,11(13)-trien-12-oate + reduced [NADPH--hemoprotein reductase] + O2 = 8-epi-inunolide + oxidized [NADPH--hemoprotein reductase] + 2 H2O. It catalyses the reaction germacra-1(10),4,11(13)-trien-12-oate + reduced [NADPH--hemoprotein reductase] + O2 = 8alpha-hydroxygermacra-1(10),4,11(13)-trien-12-oate + oxidized [NADPH--hemoprotein reductase] + H2O + H(+). It participates in secondary metabolite biosynthesis; terpenoid biosynthesis. Its function is as follows. Involved in the biosynthesis of germacrene-derived sesquiterpene lactones. Hydroxylates germacrene A acid to 8-beta-hydroxy-germacrene A and 8-alpha-hydroxy-germacrene A acids. Unlike 8-alpha-hydroxy-germacrene A acid with is spontaneously converted into inunolide (12, 8-alpha), 8-beta-hydroxy-germacrene A cannot undergo spontaneous lactonization. The protein is Germacrene A acid 8-beta-hydroxylase of Inula hupehensis (Inula helianthus-aquatilis subsp. hupehensis).